Reading from the N-terminus, the 478-residue chain is Sedoheptulokinase (478 aa).

This sequence belongs to the FGGY kinase family. As to expression, strongly expressed in liver, kidney and pancreas. Expressed at lower levels in placenta and heart. Very weakly expressed in lung and brain.

It is found in the cytoplasm. It catalyses the reaction sedoheptulose + ATP = D-sedoheptulose 7-phosphate + ADP + H(+). Its function is as follows. Acts as a modulator of macrophage activation through control of glucose metabolism. The protein is Sedoheptulokinase of Homo sapiens (Human).